The following is a 211-amino-acid chain: Adenylate kinase (211 aa).

10-15 provides a ligand contact to ATP; that stretch reads GAGKGT. Residues 30–59 are NMP; it reads STGGILRAAIQKQTALGKKVQKVVEVGGLV. AMP-binding positions include Thr-31, Arg-36, 57–59, 85–88, and Gln-92; these read GLV and GFPR. The segment at 121 to 158 is LID; that stretch reads GRRVCSACGSSYHVLFAQPKREGVCDRCRGVLVVREDD. Arg-122 is a binding site for ATP. Residues Cys-125 and Cys-128 each coordinate Zn(2+). 131–132 contributes to the ATP binding site; it reads SY. Zn(2+)-binding residues include Cys-145 and Cys-148. 2 residues coordinate AMP: Arg-155 and Arg-166. Pro-194 is an ATP binding site.

Belongs to the adenylate kinase family. As to quaternary structure, monomer.

The protein resides in the cytoplasm. The catalysed reaction is AMP + ATP = 2 ADP. It functions in the pathway purine metabolism; AMP biosynthesis via salvage pathway; AMP from ADP: step 1/1. Functionally, catalyzes the reversible transfer of the terminal phosphate group between ATP and AMP. Plays an important role in cellular energy homeostasis and in adenine nucleotide metabolism. The protein is Adenylate kinase of Treponema pallidum (strain Nichols).